A 633-amino-acid chain; its full sequence is ATP-dependent RNA helicase mrh4, mitochondrial (633 aa).

The transit peptide at Met-1–Met-38 directs the protein to the mitochondrion. The interval Met-50–Lys-115 is disordered. Positions Leu-52–Gln-63 are enriched in polar residues. Residues Arg-98–Pro-109 are compositionally biased toward basic and acidic residues. A Q motif motif is present at residues Ser-142–Arg-175. Positions Ser-195–Leu-407 constitute a Helicase ATP-binding domain. Residue Ala-208–Thr-215 coordinates ATP. The short motif at Asp-354–Asp-357 is the DEAD box element. One can recognise a Helicase C-terminal domain in the interval Phe-458–Ile-633.

It belongs to the DEAD box helicase family. MRH4 subfamily.

The protein localises to the mitochondrion. The enzyme catalyses ATP + H2O = ADP + phosphate + H(+). ATP-binding RNA helicase involved in mitochondrial RNA metabolism. Required for maintenance of mitochondrial DNA. The chain is ATP-dependent RNA helicase mrh4, mitochondrial (mrh4) from Aspergillus niger (strain ATCC MYA-4892 / CBS 513.88 / FGSC A1513).